A 282-amino-acid polypeptide reads, in one-letter code: Endo-1,4-beta-xylanase B (282 aa).

Residues 1–39 form the signal peptide; sequence MGISSILLSALIAGGALALPAAEPVSFDIRDENITLARR. Asparagine 33 carries N-linked (GlcNAc...) asparagine glycosylation. A GH11 domain is found at 40 to 219; it reads AEAINYNQDY…GSGSGQISLS (180 aa). Glutamate 117 serves as the catalytic Nucleophile. Glutamate 206 serves as the catalytic Proton donor. The interval 214–245 is disordered; sequence GQISLSKGTGGGSTTTTPTGPTSTSTAPSSGG. The segment covering 227-243 has biased composition (low complexity); sequence TTTTPTGPTSTSTAPSS. A CBM1 domain is found at 246 to 282; it reads TGAAQWGQCGGIGWTGPTTCVAPYTCKYENAYYSQCQ.

The protein belongs to the glycosyl hydrolase 11 (cellulase G) family.

Its subcellular location is the secreted. It catalyses the reaction Endohydrolysis of (1-&gt;4)-beta-D-xylosidic linkages in xylans.. The protein operates within glycan degradation; xylan degradation. Its activity is regulated as follows. Significantly inhibited by the wheat xylanase inhibiting protein I (XIP-I) and the proteinaceous endoxylanase Triticum aestivum xylanase inhibitors I (TAXI-I), but not TAXI-II. In terms of biological role, endo-1,4-beta-xylanase involved in the hydrolysis of xylan, a major structural heterogeneous polysaccharide found in plant biomass representing the second most abundant polysaccharide in the biosphere, after cellulose. The protein is Endo-1,4-beta-xylanase B (xynB) of Talaromyces funiculosus (Fruitlet core rot fungus).